We begin with the raw amino-acid sequence, 159 residues long: SsrA-binding protein (159 aa).

This sequence belongs to the SmpB family.

Its subcellular location is the cytoplasm. Its function is as follows. Required for rescue of stalled ribosomes mediated by trans-translation. Binds to transfer-messenger RNA (tmRNA), required for stable association of tmRNA with ribosomes. tmRNA and SmpB together mimic tRNA shape, replacing the anticodon stem-loop with SmpB. tmRNA is encoded by the ssrA gene; the 2 termini fold to resemble tRNA(Ala) and it encodes a 'tag peptide', a short internal open reading frame. During trans-translation Ala-aminoacylated tmRNA acts like a tRNA, entering the A-site of stalled ribosomes, displacing the stalled mRNA. The ribosome then switches to translate the ORF on the tmRNA; the nascent peptide is terminated with the 'tag peptide' encoded by the tmRNA and targeted for degradation. The ribosome is freed to recommence translation, which seems to be the essential function of trans-translation. This chain is SsrA-binding protein, found in Saccharophagus degradans (strain 2-40 / ATCC 43961 / DSM 17024).